The sequence spans 370 residues: D-aspartate oxidase (370 aa).

A signal peptide spans 1-18 (MPPRIIILGAGIIGLSTA). Residues isoleucine 13, glutamate 42, alanine 63, serine 64, and glycine 68 each contribute to the FAD site. A glycan (N-linked (GlcNAc...) asparagine) is linked at asparagine 207. FAD contacts are provided by arginine 308, glycine 338, and tyrosine 339.

This sequence belongs to the DAMOX/DASOX family. In terms of assembly, monomer. FAD serves as cofactor.

The catalysed reaction is D-aspartate + O2 + H2O = oxaloacetate + H2O2 + NH4(+). It catalyses the reaction D-glutamate + O2 + H2O = H2O2 + 2-oxoglutarate + NH4(+). Its function is as follows. Selectively catalyzes the oxidative deamination of acidic amino acids. Protects the organism from the toxicity of D-amino acids. Enables the organism to utilize D-amino acids as a source of nutrients. This Talaromyces thermophilus protein is D-aspartate oxidase.